The following is a 513-amino-acid chain: Maturase K (513 aa).

It belongs to the intron maturase 2 family. MatK subfamily.

It localises to the plastid. It is found in the chloroplast. Usually encoded in the trnK tRNA gene intron. Probably assists in splicing its own and other chloroplast group II introns. In Astrebla lappacea (Curly Mitchell grass), this protein is Maturase K.